We begin with the raw amino-acid sequence, 159 residues long: Phosphopantetheine adenylyltransferase (159 aa).

Thr10 provides a ligand contact to substrate. Residues 10-11 and His18 each bind ATP; that span reads TF. Positions 42, 74, and 88 each coordinate substrate. ATP-binding positions include 89–91, Glu99, and 124–130; these read GLR and WSFISSS.

This sequence belongs to the bacterial CoaD family. As to quaternary structure, homohexamer. The cofactor is Mg(2+).

It is found in the cytoplasm. The catalysed reaction is (R)-4'-phosphopantetheine + ATP + H(+) = 3'-dephospho-CoA + diphosphate. The protein operates within cofactor biosynthesis; coenzyme A biosynthesis; CoA from (R)-pantothenate: step 4/5. In terms of biological role, reversibly transfers an adenylyl group from ATP to 4'-phosphopantetheine, yielding dephospho-CoA (dPCoA) and pyrophosphate. The chain is Phosphopantetheine adenylyltransferase from Salmonella choleraesuis (strain SC-B67).